An 82-amino-acid polypeptide reads, in one-letter code: Cytochrome b559 subunit alpha (82 aa).

A helical membrane pass occupies residues 22–36; the sequence is VIHAITLPSIFLAGF. His24 is a binding site for heme.

This sequence belongs to the PsbE/PsbF family. Heterodimer of an alpha subunit and a beta subunit. PSII is composed of 1 copy each of membrane proteins PsbA, PsbB, PsbC, PsbD, PsbE, PsbF, PsbH, PsbI, PsbJ, PsbK, PsbL, PsbM, PsbT, PsbX, PsbY, PsbZ, Psb30/Ycf12, peripheral proteins PsbO, CyanoQ (PsbQ), PsbU, PsbV and a large number of cofactors. It forms dimeric complexes. The cofactor is heme b.

It localises to the cellular thylakoid membrane. Functionally, this b-type cytochrome is tightly associated with the reaction center of photosystem II (PSII). PSII is a light-driven water:plastoquinone oxidoreductase that uses light energy to abstract electrons from H(2)O, generating O(2) and a proton gradient subsequently used for ATP formation. It consists of a core antenna complex that captures photons, and an electron transfer chain that converts photonic excitation into a charge separation. The sequence is that of Cytochrome b559 subunit alpha from Synechococcus sp. (strain CC9311).